Consider the following 163-residue polypeptide: Nucleotide-binding protein YajQ (163 aa).

Belongs to the YajQ family.

Its function is as follows. Nucleotide-binding protein. This is Nucleotide-binding protein YajQ from Salmonella paratyphi A (strain ATCC 9150 / SARB42).